A 150-amino-acid polypeptide reads, in one-letter code: SsrA-binding protein (150 aa).

This sequence belongs to the SmpB family.

The protein localises to the cytoplasm. Required for rescue of stalled ribosomes mediated by trans-translation. Binds to transfer-messenger RNA (tmRNA), required for stable association of tmRNA with ribosomes. tmRNA and SmpB together mimic tRNA shape, replacing the anticodon stem-loop with SmpB. tmRNA is encoded by the ssrA gene; the 2 termini fold to resemble tRNA(Ala) and it encodes a 'tag peptide', a short internal open reading frame. During trans-translation Ala-aminoacylated tmRNA acts like a tRNA, entering the A-site of stalled ribosomes, displacing the stalled mRNA. The ribosome then switches to translate the ORF on the tmRNA; the nascent peptide is terminated with the 'tag peptide' encoded by the tmRNA and targeted for degradation. The ribosome is freed to recommence translation, which seems to be the essential function of trans-translation. The sequence is that of SsrA-binding protein from Flavobacterium psychrophilum (strain ATCC 49511 / DSM 21280 / CIP 103535 / JIP02/86).